We begin with the raw amino-acid sequence, 270 residues long: MTLKIGIVGSGGRMGRQLIQAVYHTEGVELGAAFERVGSSLVGTDAGELAGIGRIGIKVTDNLTQEKGNFDILIDFTRPEGTIQHLAFCVEQHKNIVIGTTGFDDQSKQAIQQAAQNIAIVFASNYSVGVNLVFKLLEKAAKVMGDYCDIEIIEAHHRHKVDAPSGTALSMGEHIAKTLGRDLKTHGVFSREGITGERKPDEIGFSTIRAADVVGEHTVWFADIGERVEISHKASSRMTFANGAVRAAKWLSTKQEGLFDMTDVLDLNNL.

Residues 9 to 14 and glutamate 35 contribute to the NAD(+) site; that span reads GSGGRM. Residue arginine 36 participates in NADP(+) binding. NAD(+)-binding positions include 99–101 and 123–126; these read GTT and ASNY. The active-site Proton donor/acceptor is the histidine 156. Histidine 157 is a binding site for (S)-2,3,4,5-tetrahydrodipicolinate. The Proton donor role is filled by lysine 160. Residue 166–167 participates in (S)-2,3,4,5-tetrahydrodipicolinate binding; sequence GT.

The protein belongs to the DapB family.

The protein resides in the cytoplasm. The catalysed reaction is (S)-2,3,4,5-tetrahydrodipicolinate + NAD(+) + H2O = (2S,4S)-4-hydroxy-2,3,4,5-tetrahydrodipicolinate + NADH + H(+). The enzyme catalyses (S)-2,3,4,5-tetrahydrodipicolinate + NADP(+) + H2O = (2S,4S)-4-hydroxy-2,3,4,5-tetrahydrodipicolinate + NADPH + H(+). Its pathway is amino-acid biosynthesis; L-lysine biosynthesis via DAP pathway; (S)-tetrahydrodipicolinate from L-aspartate: step 4/4. In terms of biological role, catalyzes the conversion of 4-hydroxy-tetrahydrodipicolinate (HTPA) to tetrahydrodipicolinate. In Histophilus somni (strain 2336) (Haemophilus somnus), this protein is 4-hydroxy-tetrahydrodipicolinate reductase.